The primary structure comprises 990 residues: Kinesin-related protein 5 (990 aa).

The Kinesin motor domain maps to 6–330 (NIRVMCRFRP…LKFGARAKSI (325 aa)). Residue 83 to 90 (GQTGSGKT) coordinates ATP. 2 disordered regions span residues 401–485 (QSNS…SSID) and 732–788 (FSSS…QDQQ). A compositionally biased stretch (gly residues) spans 406-418 (SGGGGSGSSGGSS). Low complexity-rich tracts occupy residues 466–485 (TSSISSSSISSMSSLSSSID) and 733–781 (SSSN…PSSN). Positions 513 to 948 (IEMEKMKEDT…DQLISTQRLI (436 aa)) form a coiled coil.

Belongs to the TRAFAC class myosin-kinesin ATPase superfamily. Kinesin family. Kinesin subfamily. Interacts with actin.

The protein localises to the cytoplasm. Its subcellular location is the cytoskeleton. Microtubule-associated force-producing protein that plays a role in organelle transport. Its motor activity is directed toward the microtubule's plus end. May connect microtubules to actin filaments. Associates with actin-based structures in cells and is likely involved in the organization of actin cytoskeletons in such structures. In Dictyostelium discoideum (Social amoeba), this protein is Kinesin-related protein 5 (kif5).